The chain runs to 333 residues: Autoinducer 2 import system permease protein LsrD (333 aa).

10 helical membrane passes run 7 to 27 (YGWE…FGLS), 45 to 65 (ICIG…GIDI), 67 to 87 (FGST…AGVP), 90 to 110 (VAIP…AGLI), 118 to 138 (LVIT…LSGL), 162 to 182 (LFGL…FWLL), 212 to 232 (TLCM…ILLV), 240 to 260 (SDLG…GGAN), 261 to 281 (IYGG…VGYL), and 288 to 308 (IGTP…LVVV).

It belongs to the binding-protein-dependent transport system permease family. AraH/RbsC subfamily. In terms of assembly, the complex is composed of two ATP-binding proteins (LsrA), two transmembrane proteins (LsrC and LsrD) and a solute-binding protein (LsrB).

The protein localises to the cell inner membrane. Functionally, part of the ABC transporter complex LsrABCD involved in autoinducer 2 (AI-2) import. Probably responsible for the translocation of the substrate across the membrane. This chain is Autoinducer 2 import system permease protein LsrD (lsrD), found in Yersinia pestis bv. Antiqua (strain Antiqua).